The sequence spans 67 residues: uncharacterized protein (67 aa).

This is an uncharacterized protein from Saccharolobus islandicus (Sulfolobus islandicus).